A 417-amino-acid polypeptide reads, in one-letter code: Indole-3-pyruvate monooxygenase YUCCA6 (417 aa).

36 to 41 (GAGPSG) contacts FAD. 204-209 (GCGNSG) is an NADP(+) binding site.

Belongs to the FMO family. FAD is required as a cofactor. As to expression, highly expressed in roots but modestly expressed in the cauline leaves and flowers. Expressed in anthers.

It localises to the cytoplasm. It catalyses the reaction indole-3-pyruvate + NADPH + O2 + H(+) = (indol-3-yl)acetate + CO2 + NADP(+) + H2O. It participates in plant hormone metabolism; auxin biosynthesis. Its function is as follows. Involved in auxin biosynthesis via the indole-3-pyruvic acid (IPA) pathway. Also able to convert in vitro phenyl pyruvate (PPA) to phenyl acetic acid (PAA). Required for the formation of floral organs and vascular tissues. Belongs to the set of redundant YUCCA genes probably responsible for auxin biosynthesis in shoots. In Arabidopsis thaliana (Mouse-ear cress), this protein is Indole-3-pyruvate monooxygenase YUCCA6 (YUC6).